The chain runs to 241 residues: ATP synthase subunit a (241 aa).

Helical transmembrane passes span 30–50 (GQVFMTSWLLIGALLALVVIG), 91–111 (FIGTLFLFIFVSNWGGALVPW), 128–148 (INTTVALALLVSLSYFYAGLS), 193–213 (LVVAVLVFLVPLVLPVPVMFL), and 214–234 (GLFTSAIQALIFATLAAYYIG).

It belongs to the ATPase A chain family. In terms of assembly, F-type ATPases have 2 components, CF(1) - the catalytic core - and CF(0) - the membrane proton channel. CF(1) has five subunits: alpha(3), beta(3), gamma(1), delta(1), epsilon(1). CF(0) has four main subunits: a, b, b' and c.

It localises to the cellular thylakoid membrane. In terms of biological role, key component of the proton channel; it plays a direct role in the translocation of protons across the membrane. In Prochlorococcus marinus (strain NATL1A), this protein is ATP synthase subunit a.